A 331-amino-acid polypeptide reads, in one-letter code: Glyceraldehyde-3-phosphate dehydrogenase (331 aa).

NAD(+)-binding positions include 12–13, aspartate 34, arginine 78, and threonine 120; that span reads RI. D-glyceraldehyde 3-phosphate-binding positions include 149–151, threonine 180, 209–210, and arginine 232; these read SCT and TG. The active-site Nucleophile is the cysteine 150. Residue asparagine 314 coordinates NAD(+).

It belongs to the glyceraldehyde-3-phosphate dehydrogenase family. In terms of assembly, homotetramer.

Its subcellular location is the cytoplasm. The enzyme catalyses D-glyceraldehyde 3-phosphate + phosphate + NAD(+) = (2R)-3-phospho-glyceroyl phosphate + NADH + H(+). The protein operates within carbohydrate degradation; glycolysis; pyruvate from D-glyceraldehyde 3-phosphate: step 1/5. Catalyzes the oxidative phosphorylation of glyceraldehyde 3-phosphate (G3P) to 1,3-bisphosphoglycerate (BPG) using the cofactor NAD. The first reaction step involves the formation of a hemiacetal intermediate between G3P and a cysteine residue, and this hemiacetal intermediate is then oxidized to a thioester, with concomitant reduction of NAD to NADH. The reduced NADH is then exchanged with the second NAD, and the thioester is attacked by a nucleophilic inorganic phosphate to produce BPG. The chain is Glyceraldehyde-3-phosphate dehydrogenase (gapA) from Shimwellia blattae (strain ATCC 29907 / DSM 4481 / JCM 1650 / NBRC 105725 / CDC 9005-74) (Escherichia blattae).